The primary structure comprises 99 residues: Single insulin-like growth factor-binding domain protein-2 (99 aa).

The first 18 residues, methionine 1–alanine 18, serve as a signal peptide directing secretion. In terms of domain architecture, IGFBP N-terminal spans leucine 19 to lysine 98. An O-linked (GalNAc...) serine glycan is attached at serine 20. 6 disulfides stabilise this stretch: cysteine 21–cysteine 44, cysteine 24–cysteine 46, cysteine 29–cysteine 47, cysteine 35–cysteine 50, cysteine 58–cysteine 74, and cysteine 68–cysteine 95.

Expressed in hemocytes.

Its subcellular location is the secreted. In terms of biological role, has a role in the innate immune system. This Cupiennius salei (American wandering spider) protein is Single insulin-like growth factor-binding domain protein-2.